The primary structure comprises 412 residues: Multifunctional CCA protein (412 aa).

ATP contacts are provided by Gly8 and Arg11. Residues Gly8 and Arg11 each coordinate CTP. Mg(2+)-binding residues include Asp21 and Asp23. 3 residues coordinate ATP: Arg91, Arg137, and Arg140. Arg91, Arg137, and Arg140 together coordinate CTP. Residues 228–329 (TGIHTLMTLS…VKLFDSIDAW (102 aa)) enclose the HD domain.

The protein belongs to the tRNA nucleotidyltransferase/poly(A) polymerase family. Bacterial CCA-adding enzyme type 1 subfamily. Monomer. Can also form homodimers and oligomers. Mg(2+) serves as cofactor. Ni(2+) is required as a cofactor.

The enzyme catalyses a tRNA precursor + 2 CTP + ATP = a tRNA with a 3' CCA end + 3 diphosphate. It carries out the reaction a tRNA with a 3' CCA end + 2 CTP + ATP = a tRNA with a 3' CCACCA end + 3 diphosphate. In terms of biological role, catalyzes the addition and repair of the essential 3'-terminal CCA sequence in tRNAs without using a nucleic acid template. Adds these three nucleotides in the order of C, C, and A to the tRNA nucleotide-73, using CTP and ATP as substrates and producing inorganic pyrophosphate. tRNA 3'-terminal CCA addition is required both for tRNA processing and repair. Also involved in tRNA surveillance by mediating tandem CCA addition to generate a CCACCA at the 3' terminus of unstable tRNAs. While stable tRNAs receive only 3'-terminal CCA, unstable tRNAs are marked with CCACCA and rapidly degraded. The chain is Multifunctional CCA protein from Escherichia coli O81 (strain ED1a).